We begin with the raw amino-acid sequence, 33 residues long: Brevinin-2JD (33 aa).

The cysteines at positions 27 and 33 are disulfide-linked.

In terms of tissue distribution, expressed by the skin glands.

It localises to the secreted. In terms of biological role, has antibacterial activity against E.coli ATCC 25992 (MIC=38 uM), E.coli CIB 84492 (MIC=38 uM), S.aureus ATCC 25923 (MIC=19 uM) and S.aureus CIB 85462 (MIC=19 uM). Has antifungal activity against C.albicans (MIC=19 uM). Has weak hemolytic activity against rabbit erythrocytes. The protein is Brevinin-2JD of Odorrana jingdongensis (Jingdong frog).